We begin with the raw amino-acid sequence, 153 residues long: UPF0178 protein Ccel_2994 (153 aa).

This sequence belongs to the UPF0178 family.

This chain is UPF0178 protein Ccel_2994, found in Ruminiclostridium cellulolyticum (strain ATCC 35319 / DSM 5812 / JCM 6584 / H10) (Clostridium cellulolyticum).